A 554-amino-acid polypeptide reads, in one-letter code: Perforin-1 (554 aa).

The N-terminal stretch at 1 to 20 (MAAYLFLLGLFLLLPRPVPA) is a signal peptide. 3 cysteine pairs are disulfide-bonded: Cys-22/Cys-75, Cys-30/Cys-72, and Cys-101/Cys-175. In terms of domain architecture, MACPF spans 26–374 (TRSECKQNHK…HYVMSRARWR (349 aa)). Residues 128–148 (WRAGLDVNPKPEANVHVSVAG) form a beta stranded membrane-spanning segment. Asn-204 carries N-linked (GlcNAc...) asparagine glycosylation. 4 disulfides stabilise this stretch: Cys-241/Cys-407, Cys-376/Cys-392, Cys-380/Cys-394, and Cys-396/Cys-406. A beta stranded transmembrane segment spans residues 256 to 278 (CLSVEAQVSIGAQASVSSEYKAC). The 33-residue stretch at 375-407 (DCNRPCRAGQHKSSRDSCQCVCQDSNVTNQDCC) folds into the EGF-like domain. The 119-residue stretch at 395–513 (VCQDSNVTNQ…FHEVNCPLNH (119 aa)) folds into the C2 domain. The N-linked (GlcNAc...) asparagine glycan is linked to Asn-400. Residues Gly-428, Asp-429, Thr-432, Asp-435, Asn-454, Asp-483, Ala-484, Asp-485, Trp-488, Asp-489, Asp-490, and Asp-491 each coordinate Ca(2+). 2 cysteine pairs are disulfide-bonded: Cys-496/Cys-509 and Cys-524/Cys-533. N-linked (GlcNAc...) asparagine glycosylation occurs at Asn-548.

Belongs to the complement C6/C7/C8/C9 family. Monomer, as soluble protein. Homooligomer; homooligomerizes to form a pore-forming ring. Ca(2+) is required as a cofactor. N-glycosylated. In terms of tissue distribution, detected in large granular lymphocytes and lymphokine-activated killer cells.

The protein resides in the cytolytic granule. It is found in the secreted. It localises to the cell membrane. The protein localises to the endosome lumen. Functionally, pore-forming protein that plays a key role in granzyme-mediated programmed cell death, and in defense against virus-infected or neoplastic cells. Can insert into the membrane of target cells in its calcium-bound form, oligomerize and form large pores. Promotes cytolysis and apoptosis of target cells by mediating the passage and uptake of cytotoxic granzymes. Facilitates the delivery of cationic cargo protein, while anionic or neural proteins are not delivered efficiently. Perforin pores allow the release of mature caspase-7 (CASP7) into the extracellular milieu. This is Perforin-1 (Prf1) from Rattus norvegicus (Rat).